The following is a 274-amino-acid chain: MSIAITSPCQIFPAIINADVYEKNLKVDDNAINVSKYSDNSVSLPTLSYEDFHHFSVVRHWNILFPYRLATEWNWESRRLRKRDALVILELVALSDETNKRGSVSRIMNTVRSKVHLMFSSSTELPSFQEIENWKKSPGLLAASKYGCALFIQFLKQQTSENEVDFWLDCQKFRSSTAKISWKNKEVHRILDQFLSSSAPRKIDMETSILARCMEYVEHIEGWKYTFDVAQAYVGLKFPKESHKKFLEDPLYLDLLELVISGRSCNKVGHKKSC.

One can recognise an RGS domain in the interval 137 to 256 (SPGLLAASKY…LEDPLYLDLL (120 aa)).

The sequence is that of Regulator of G-protein signaling rgs-11 (rgs-11) from Caenorhabditis elegans.